Consider the following 932-residue polypeptide: MYCBP-associated protein (932 aa).

2 disordered regions span residues 1–39 and 165–187; these read MMKK…PVSN and EEPK…PPQH. Residues 165–178 are compositionally biased toward basic and acidic residues; sequence EEPKPKPPKEEERP. A Phosphoserine modification is found at Ser-559. Residue Thr-560 is modified to Phosphothreonine. Ser-566 carries the phosphoserine modification. The segment at 789–886 is disordered; the sequence is LPDEQGQKSP…TAPSQEPIDP (98 aa). Over residues 795-806 the composition is skewed to polar residues; it reads QKSPPVTESKVT. Positions 810 to 869 are enriched in basic and acidic residues; that stretch reads AGKEDRRGGAQEKKQLGTKDKDDKRGSKTPGKEDRPNSKKLKPKDDKKVVKSASRDRLLS.

In terms of assembly, interacts with MYCBP.

Its subcellular location is the cytoplasm. The protein localises to the membrane. Its function is as follows. May play a role in spermatogenesis. May be involved in synaptic processes. The chain is MYCBP-associated protein from Mus musculus (Mouse).